Here is a 182-residue protein sequence, read N- to C-terminus: Large ribosomal subunit protein uL6 (182 aa).

Belongs to the universal ribosomal protein uL6 family. In terms of assembly, part of the 50S ribosomal subunit.

This protein binds to the 23S rRNA, and is important in its secondary structure. It is located near the subunit interface in the base of the L7/L12 stalk, and near the tRNA binding site of the peptidyltransferase center. This is Large ribosomal subunit protein uL6 from Desulforamulus reducens (strain ATCC BAA-1160 / DSM 100696 / MI-1) (Desulfotomaculum reducens).